Consider the following 449-residue polypeptide: tRNA modification GTPase MnmE (449 aa).

3 residues coordinate (6S)-5-formyl-5,6,7,8-tetrahydrofolate: R24, E81, and K121. The TrmE-type G domain maps to 218 to 375; it reads GLVVAITGPP…LIAALGKFAA (158 aa). GTP-binding positions include 228–233, 247–253, and 272–275; these read NVGKST, SPHAGTT, and DTAG. Mg(2+) contacts are provided by S232 and T253. K449 is a (6S)-5-formyl-5,6,7,8-tetrahydrofolate binding site.

The protein belongs to the TRAFAC class TrmE-Era-EngA-EngB-Septin-like GTPase superfamily. TrmE GTPase family. In terms of assembly, homodimer. Heterotetramer of two MnmE and two MnmG subunits. Requires K(+) as cofactor.

It localises to the cytoplasm. Exhibits a very high intrinsic GTPase hydrolysis rate. Involved in the addition of a carboxymethylaminomethyl (cmnm) group at the wobble position (U34) of certain tRNAs, forming tRNA-cmnm(5)s(2)U34. In Rhodopseudomonas palustris (strain BisB18), this protein is tRNA modification GTPase MnmE.